We begin with the raw amino-acid sequence, 224 residues long: MNPAWALLRLASPQLPIGGYSYSQGLEMAVEQQRVNDQASARRWISDQLLLNLARFEAPLLLAHCQAAADQDWARLQQLSEEHRASRETRELYQESRQMGYSLKQLLEGLPELDSDARELLTHQDEPHLALGWALAARAWGISPADALAAWLWSWLENQLAVLMKTLPLGQQAAQRLTSELLPLLQQAQHHAANLDPNHHGSAAFGLSLASMAHERQYSRLFRS.

The protein belongs to the UreF family. As to quaternary structure, ureD, UreF and UreG form a complex that acts as a GTP-hydrolysis-dependent molecular chaperone, activating the urease apoprotein by helping to assemble the nickel containing metallocenter of UreC. The UreE protein probably delivers the nickel.

The protein resides in the cytoplasm. Functionally, required for maturation of urease via the functional incorporation of the urease nickel metallocenter. The chain is Urease accessory protein UreF from Pseudomonas fluorescens (strain ATCC BAA-477 / NRRL B-23932 / Pf-5).